We begin with the raw amino-acid sequence, 1070 residues long: Carbamoyl phosphate synthase large chain (1070 aa).

The interval 1 to 401 is carboxyphosphate synthetic domain; it reads MPKRDDIKTI…ALLKAVRSLE (401 aa). ATP is bound by residues arginine 129, arginine 169, glycine 175, glycine 176, lysine 208, isoleucine 210, glutamate 215, glycine 241, isoleucine 242, histidine 243, glutamine 284, and glutamate 298. Residues 133–327 enclose the ATP-grasp 1 domain; that stretch reads RDLMNELGEP…IAKLAAKIAV (195 aa). Positions 284, 298, and 300 each coordinate Mg(2+). 3 residues coordinate Mn(2+): glutamine 284, glutamate 298, and asparagine 300. The tract at residues 402 to 546 is oligomerization domain; it reads VGADHLLLEE…YSTYEEENES (145 aa). A carbamoyl phosphate synthetic domain region spans residues 547 to 929; the sequence is TRSAKESVIV…ALYKGFVASG (383 aa). One can recognise an ATP-grasp 2 domain in the interval 671-861; that stretch reads EKALEILQIP…MANVATRVIL (191 aa). Residues arginine 707, arginine 746, valine 748, glutamate 752, glycine 777, valine 778, histidine 779, serine 780, glutamine 820, and glutamate 832 each coordinate ATP. Residues glutamine 820, glutamate 832, and asparagine 834 each contribute to the Mg(2+) site. Positions 820, 832, and 834 each coordinate Mn(2+). The region spanning 930 to 1070 is the MGS-like domain; sequence TTMHDYGTVL…SEVKQPKVRV (141 aa). The tract at residues 930-1070 is allosteric domain; that stretch reads TTMHDYGTVL…SEVKQPKVRV (141 aa).

Belongs to the CarB family. As to quaternary structure, composed of two chains; the small (or glutamine) chain promotes the hydrolysis of glutamine to ammonia, which is used by the large (or ammonia) chain to synthesize carbamoyl phosphate. Tetramer of heterodimers (alpha,beta)4. Mg(2+) serves as cofactor. Mn(2+) is required as a cofactor.

The enzyme catalyses hydrogencarbonate + L-glutamine + 2 ATP + H2O = carbamoyl phosphate + L-glutamate + 2 ADP + phosphate + 2 H(+). The catalysed reaction is hydrogencarbonate + NH4(+) + 2 ATP = carbamoyl phosphate + 2 ADP + phosphate + 2 H(+). It functions in the pathway amino-acid biosynthesis; L-arginine biosynthesis; carbamoyl phosphate from bicarbonate: step 1/1. The protein operates within pyrimidine metabolism; UMP biosynthesis via de novo pathway; (S)-dihydroorotate from bicarbonate: step 1/3. Functionally, large subunit of the glutamine-dependent carbamoyl phosphate synthetase (CPSase). CPSase catalyzes the formation of carbamoyl phosphate from the ammonia moiety of glutamine, carbonate, and phosphate donated by ATP, constituting the first step of 2 biosynthetic pathways, one leading to arginine and/or urea and the other to pyrimidine nucleotides. The large subunit (synthetase) binds the substrates ammonia (free or transferred from glutamine from the small subunit), hydrogencarbonate and ATP and carries out an ATP-coupled ligase reaction, activating hydrogencarbonate by forming carboxy phosphate which reacts with ammonia to form carbamoyl phosphate. This chain is Carbamoyl phosphate synthase large chain, found in Listeria welshimeri serovar 6b (strain ATCC 35897 / DSM 20650 / CCUG 15529 / CIP 8149 / NCTC 11857 / SLCC 5334 / V8).